The primary structure comprises 705 residues: Polyribonucleotide nucleotidyltransferase (705 aa).

Mg(2+)-binding residues include D494 and D500. The region spanning 561 to 620 is the KH domain; sequence PRITTVKVKPEKVRAVIGTGGKNIRQIVSETGVTIDVEDDGTVTIASSDMEASARAIAMV. The region spanning 630-698 is the S1 motif domain; that stretch reads GKIYRGTVKK…KQGKIRLSRK (69 aa).

It belongs to the polyribonucleotide nucleotidyltransferase family. Mg(2+) serves as cofactor.

It is found in the cytoplasm. The catalysed reaction is RNA(n+1) + phosphate = RNA(n) + a ribonucleoside 5'-diphosphate. Functionally, involved in mRNA degradation. Catalyzes the phosphorolysis of single-stranded polyribonucleotides processively in the 3'- to 5'-direction. The protein is Polyribonucleotide nucleotidyltransferase of Syntrophus aciditrophicus (strain SB).